A 345-amino-acid chain; its full sequence is uncharacterized protein (345 aa).

2 disordered regions span residues 1–24 and 296–345; these read MGLE…ENRK and MTAH…LNES. Residues 304–323 show a composition bias toward acidic residues; the sequence is SDYDNDDDTDGIINETDYEL. The span at 324–345 shows a compositional bias: polar residues; sequence DTSQSEFATLTTSSNKSILNES.

This is an uncharacterized protein from Schizosaccharomyces pombe (strain 972 / ATCC 24843) (Fission yeast).